The sequence spans 490 residues: Hexokinase (490 aa).

The 446-residue stretch at 21-466 (QNLLEHIKHF…SGVGAALIAA (446 aa)) folds into the Hexokinase domain. Residues 75-209 (DGKETGTFLA…GLPIKVAALI (135 aa)) are hexokinase small subdomain. Positions 210–455 (NDTTGTLIAS…DKVTIHAAED (246 aa)) are hexokinase large subdomain.

The protein belongs to the hexokinase family. Monomer.

The catalysed reaction is a D-hexose + ATP = a D-hexose 6-phosphate + ADP + H(+). It catalyses the reaction D-fructose + ATP = D-fructose 6-phosphate + ADP + H(+). It carries out the reaction D-glucose + ATP = D-glucose 6-phosphate + ADP + H(+). It participates in carbohydrate metabolism; hexose metabolism. It functions in the pathway carbohydrate degradation; glycolysis; D-glyceraldehyde 3-phosphate and glycerone phosphate from D-glucose: step 1/4. Functionally, catalyzes the phosphorylation of hexose, such as D-glucose and D-fructose, to hexose 6-phosphate (D-glucose 6-phosphate and D-fructose 6-phosphate, respectively). Mediates the initial step of glycolysis by catalyzing phosphorylation of D-glucose to D-glucose 6-phosphate. The polypeptide is Hexokinase (hxkA) (Emericella nidulans (strain FGSC A4 / ATCC 38163 / CBS 112.46 / NRRL 194 / M139) (Aspergillus nidulans)).